The primary structure comprises 373 residues: Glutamate 5-kinase (373 aa).

K15 is an ATP binding site. 3 residues coordinate substrate: S54, D141, and N153. ATP-binding positions include 173-174 (SD) and 215-221 (TGGMATK). In terms of domain architecture, PUA spans 280–358 (RGKLLVDEGA…SEIEVVLGYK (79 aa)).

Belongs to the glutamate 5-kinase family.

The protein resides in the cytoplasm. It carries out the reaction L-glutamate + ATP = L-glutamyl 5-phosphate + ADP. Its pathway is amino-acid biosynthesis; L-proline biosynthesis; L-glutamate 5-semialdehyde from L-glutamate: step 1/2. Its function is as follows. Catalyzes the transfer of a phosphate group to glutamate to form L-glutamate 5-phosphate. The chain is Glutamate 5-kinase from Syntrophotalea carbinolica (strain DSM 2380 / NBRC 103641 / GraBd1) (Pelobacter carbinolicus).